A 38-amino-acid polypeptide reads, in one-letter code: Trypsin inhibitor 2 (38 aa).

Residue Gln1 is modified to Pyrrolidone carboxylic acid.

In terms of processing, contains disulfide bonds.

Inhibits trypsin-like proteases from the guts of the insect pests P.truncatus, P.americana, Acheta sp and Gryllus sp. In Opuntia streptacantha (Prickly pear cactus), this protein is Trypsin inhibitor 2.